Consider the following 349-residue polypeptide: S-adenosylmethionine:tRNA ribosyltransferase-isomerase (349 aa).

Belongs to the QueA family. Monomer.

The protein resides in the cytoplasm. The enzyme catalyses 7-aminomethyl-7-carbaguanosine(34) in tRNA + S-adenosyl-L-methionine = epoxyqueuosine(34) in tRNA + adenine + L-methionine + 2 H(+). The protein operates within tRNA modification; tRNA-queuosine biosynthesis. Functionally, transfers and isomerizes the ribose moiety from AdoMet to the 7-aminomethyl group of 7-deazaguanine (preQ1-tRNA) to give epoxyqueuosine (oQ-tRNA). This chain is S-adenosylmethionine:tRNA ribosyltransferase-isomerase, found in Pseudomonas putida (strain GB-1).